The sequence spans 104 residues: UPF0235 protein Paes_1868 (104 aa).

This sequence belongs to the UPF0235 family.

In Prosthecochloris aestuarii (strain DSM 271 / SK 413), this protein is UPF0235 protein Paes_1868.